The primary structure comprises 126 residues: Fluoride-specific ion channel FluC 1 (126 aa).

Helical transmembrane passes span 5-25 (FILAVAAGGSLGSVARYLVGI), 39-59 (TLFINITGSLLIGLFAGLFAI), 69-89 (IFLIVGICGGYTTFSTFSLDS), and 100-120 (AAGAYMIASVVLSVGALIAGI). 2 residues coordinate Na(+): Gly-77 and Thr-80.

Belongs to the fluoride channel Fluc/FEX (TC 1.A.43) family.

It localises to the cell inner membrane. It catalyses the reaction fluoride(in) = fluoride(out). Na(+) is not transported, but it plays an essential structural role and its presence is essential for fluoride channel function. Its function is as follows. Fluoride-specific ion channel. Important for reducing fluoride concentration in the cell, thus reducing its toxicity. The polypeptide is Fluoride-specific ion channel FluC 1 (Nitrobacter hamburgensis (strain DSM 10229 / NCIMB 13809 / X14)).